Here is a 283-residue protein sequence, read N- to C-terminus: 4-diphosphocytidyl-2-C-methyl-D-erythritol kinase (283 aa).

Residue Lys10 is part of the active site. An ATP-binding site is contributed by 95–105; that stretch reads PVAAGLGGGSS. Asp137 is an active-site residue.

Belongs to the GHMP kinase family. IspE subfamily.

It catalyses the reaction 4-CDP-2-C-methyl-D-erythritol + ATP = 4-CDP-2-C-methyl-D-erythritol 2-phosphate + ADP + H(+). It functions in the pathway isoprenoid biosynthesis; isopentenyl diphosphate biosynthesis via DXP pathway; isopentenyl diphosphate from 1-deoxy-D-xylulose 5-phosphate: step 3/6. Catalyzes the phosphorylation of the position 2 hydroxy group of 4-diphosphocytidyl-2C-methyl-D-erythritol. The chain is 4-diphosphocytidyl-2-C-methyl-D-erythritol kinase from Limosilactobacillus reuteri (strain DSM 20016) (Lactobacillus reuteri).